Reading from the N-terminus, the 172-residue chain is MSSSQNNNSSWIDWFLGIKGNQFLCRVPTDYVQDTFNQMGLEYFSEILDVILKPVIDSSSGLLYGDEKKWYGMIHARYIRSERGLIAMHRKYMRGDFGSCPNISCDRQNTLPVGLSAVWGKSTVKIHCPRCKSNFHPKSDTQLDGAMFGPSFPDIFFSLLPNLTSPLDDPRT.

This sequence belongs to the casein kinase 2 subunit beta family. In terms of assembly, interacts in vitro with the casein kinase 2 alpha subunit (CkII-alpha). The relevance of such interaction is however unclear in vivo. As to expression, probably not expressed in wild-type flies. In males lacking the Y chromosome, it is testis-specific and constitutes the main component of star-shaped crystals.

Unknown. In males lacking the Y chromosome, its strong overexpression leads to the appearance of proteinaceous star-shaped crystals in the primary spermatocytes causing meiotic drive, possibly by interfering with normal casein kinase 2 activity. The polypeptide is Stellate protein CG33237 (Ste:CG33237) (Drosophila melanogaster (Fruit fly)).